Reading from the N-terminus, the 156-residue chain is Transcription elongation factor GreA (156 aa).

A coiled-coil region spans residues 46–66 (AEYHAAREKQSFVEGRIKELE).

It belongs to the GreA/GreB family.

Necessary for efficient RNA polymerase transcription elongation past template-encoded arresting sites. The arresting sites in DNA have the property of trapping a certain fraction of elongating RNA polymerases that pass through, resulting in locked ternary complexes. Cleavage of the nascent transcript by cleavage factors such as GreA or GreB allows the resumption of elongation from the new 3'terminus. GreA releases sequences of 2 to 3 nucleotides. In Paracoccus denitrificans (strain Pd 1222), this protein is Transcription elongation factor GreA.